Reading from the N-terminus, the 250-residue chain is DNA repair protein RecO (250 aa).

Belongs to the RecO family.

Functionally, involved in DNA repair and RecF pathway recombination. The chain is DNA repair protein RecO from Thermodesulfovibrio yellowstonii (strain ATCC 51303 / DSM 11347 / YP87).